The sequence spans 105 residues: Guanyl-specific ribonuclease U1 (105 aa).

Q1 carries the post-translational modification Pyrrolidone carboxylic acid. 2 disulfides stabilise this stretch: C8/C103 and C51/C87. The active site involves H37. E57 serves as the catalytic Proton acceptor. Residue H92 is the Proton donor of the active site.

The protein belongs to the ribonuclease N1/T1 family.

The catalysed reaction is [RNA] containing guanosine + H2O = an [RNA fragment]-3'-guanosine-3'-phosphate + a 5'-hydroxy-ribonucleotide-3'-[RNA fragment].. The protein is Guanyl-specific ribonuclease U1 of Ustilago sphaerogena (Smut fungus).